We begin with the raw amino-acid sequence, 793 residues long: Spindle and centriole-associated protein 1 (793 aa).

Positions 1 to 29 (MSYLRASRTSSNLSLAKKPSKTRKKLQAR) are disordered. Positions 18–27 (KPSKTRKKLQ) are enriched in basic residues. Positions 312–405 (SLGLLNSMIM…LTAEILSLKE (94 aa)) form a coiled coil. Residues 519-542 (KTVGNLSSHSAVPKRAANRLPSPP) form a disordered region. Residues 622 to 712 (LQNEDLVSQM…LLKLIEQQKQ (91 aa)) adopt a coiled-coil conformation. The segment covering 718-739 (PTLSPITPQGRRTGSSLDTTPL) has biased composition (polar residues). The tract at residues 718–783 (PTLSPITPQG…RSQAANDRGE (66 aa)) is disordered. Over residues 740 to 753 (SSCSTSGRRSSGAS) the composition is skewed to low complexity. Polar residues predominate over residues 754–778 (NKSESISTSVGSLRSASTGRRSQAA).

The protein localises to the cytoplasm. It localises to the cytoskeleton. Its subcellular location is the microtubule organizing center. It is found in the centrosome. The protein resides in the centriole. The protein localises to the spindle. In terms of biological role, regulator required for centriole duplication. The sequence is that of Spindle and centriole-associated protein 1 (spice1) from Xenopus laevis (African clawed frog).